A 319-amino-acid chain; its full sequence is Epoxyqueuosine reductase (319 aa).

Residue D146 is the Proton donor of the active site. The 4Fe-4S ferredoxin-type domain occupies A188–V220. [4Fe-4S] cluster-binding residues include C200, C203, C206, C210, C226, C250, C253, and C257.

The protein belongs to the QueG family. As to quaternary structure, monomer. It depends on cob(II)alamin as a cofactor. [4Fe-4S] cluster serves as cofactor.

Its subcellular location is the cytoplasm. It catalyses the reaction epoxyqueuosine(34) in tRNA + AH2 = queuosine(34) in tRNA + A + H2O. The protein operates within tRNA modification; tRNA-queuosine biosynthesis. Catalyzes the conversion of epoxyqueuosine (oQ) to queuosine (Q), which is a hypermodified base found in the wobble positions of tRNA(Asp), tRNA(Asn), tRNA(His) and tRNA(Tyr). The sequence is that of Epoxyqueuosine reductase from Synechococcus sp. (strain RCC307).